The chain runs to 354 residues: Fructose-bisphosphate aldolase (354 aa).

Ser-50 lines the D-glyceraldehyde 3-phosphate pocket. The active-site Proton donor is Asp-83. Residues His-84, Asp-105, Glu-142, and His-198 each coordinate Zn(2+). Gly-199 provides a ligand contact to dihydroxyacetone phosphate. Residue His-232 participates in Zn(2+) binding. Dihydroxyacetone phosphate is bound by residues 233–235 (GSS) and 275–278 (NIDT).

The protein belongs to the class II fructose-bisphosphate aldolase family. Requires Zn(2+) as cofactor.

It carries out the reaction beta-D-fructose 1,6-bisphosphate = D-glyceraldehyde 3-phosphate + dihydroxyacetone phosphate. It functions in the pathway carbohydrate degradation; glycolysis; D-glyceraldehyde 3-phosphate and glycerone phosphate from D-glucose: step 4/4. In terms of biological role, catalyzes the aldol condensation of dihydroxyacetone phosphate (DHAP or glycerone-phosphate) with glyceraldehyde 3-phosphate (G3P) to form fructose 1,6-bisphosphate (FBP) in gluconeogenesis and the reverse reaction in glycolysis. The polypeptide is Fructose-bisphosphate aldolase (fba) (Stutzerimonas stutzeri (Pseudomonas stutzeri)).